Here is a 258-residue protein sequence, read N- to C-terminus: Tryptophan synthase alpha chain (258 aa).

Catalysis depends on proton acceptor residues Glu47 and Asp58.

The protein belongs to the TrpA family. Tetramer of two alpha and two beta chains.

It catalyses the reaction (1S,2R)-1-C-(indol-3-yl)glycerol 3-phosphate + L-serine = D-glyceraldehyde 3-phosphate + L-tryptophan + H2O. It participates in amino-acid biosynthesis; L-tryptophan biosynthesis; L-tryptophan from chorismate: step 5/5. Its function is as follows. The alpha subunit is responsible for the aldol cleavage of indoleglycerol phosphate to indole and glyceraldehyde 3-phosphate. This chain is Tryptophan synthase alpha chain, found in Bacillus mycoides (strain KBAB4) (Bacillus weihenstephanensis).